We begin with the raw amino-acid sequence, 81 residues long: Neuronatin (81 aa).

This sequence belongs to the neuronatin family.

Its function is as follows. May participate in the maintenance of segment identity in the hindbrain and pituitary development, and maturation or maintenance of the overall structure of the nervous system. May function as a regulatory subunit of ion channels. The polypeptide is Neuronatin (NNAT) (Homo sapiens (Human)).